Here is a 175-residue protein sequence, read N- to C-terminus: ATP-dependent protease subunit HslV (175 aa).

Residue Thr2 is part of the active site. Positions 156, 159, and 162 each coordinate Na(+).

Belongs to the peptidase T1B family. HslV subfamily. As to quaternary structure, a double ring-shaped homohexamer of HslV is capped on each side by a ring-shaped HslU homohexamer. The assembly of the HslU/HslV complex is dependent on binding of ATP.

Its subcellular location is the cytoplasm. The catalysed reaction is ATP-dependent cleavage of peptide bonds with broad specificity.. Allosterically activated by HslU binding. In terms of biological role, protease subunit of a proteasome-like degradation complex believed to be a general protein degrading machinery. The sequence is that of ATP-dependent protease subunit HslV from Rhizobium rhizogenes (strain K84 / ATCC BAA-868) (Agrobacterium radiobacter).